The chain runs to 664 residues: Cyclic nucleotide-gated channel alpha-2 (664 aa).

A compositionally biased stretch (polar residues) spans 1-10 (MMTEKSNGVK). The tract at residues 1–51 (MMTEKSNGVKSSPANNHNHHPPPSIKANGKDDHRAGSRPQSVAADDDTSPE) is disordered. The Cytoplasmic segment spans residues 1 to 146 (MMTEKSNGVK…PAGDWYYRWL (146 aa)). Residues 147–168 (FVIAMPVLYNWCLLVARACFSD) traverse the membrane as a helical segment. Residues 169–178 (LQRNYFVVWL) lie on the Extracellular side of the membrane. The helical transmembrane segment at 179–199 (VLDYFSDTVYIADLIIRLRTG) threads the bilayer. Residues 200–224 (FLEQGLLVKDPKKLRDNYIHTLQFK) are Cytoplasmic-facing. Residues 225 to 243 (LDVASIIPTDLIYFAVGIH) form a helical membrane-spanning segment. Over 244-248 (SPEVR) the chain is Extracellular. The chain crosses the membrane as a helical span at residues 249–267 (FNRLLHFARMFEFFDRTET). The Cytoplasmic segment spans residues 268-274 (RTSYPNI). Positions 272-380 (PNIFRISNLV…GNVGSMISNM (109 aa)) are ion conduction pathway. Residues 275–298 (FRISNLVLYILVIIHWNACIYYVI) traverse the membrane as a helical segment. Topologically, residues 299-321 (SKSIGFGVDTWVYPNITDPEYGY) are extracellular. Transmembrane regions (helical) follow at residues 322–356 (LARE…LFVI) and 357–381 (FDFL…SNMN). Residues 339–342 (TIGE) form a selectivity filter region. Positions 382–458 (ATRAEFQAKI…STLKKVRIFQ (77 aa)) are C-linker. At 382-664 (ATRAEFQAKI…INTPEPTAAE (283 aa)) the chain is on the cytoplasmic side. The cyclic nucleotide-binding domain stretch occupies residues 462–582 (AGLLVELVLK…EERGREILMK (121 aa)). Residues Gly-522, Ser-525, Arg-538, and Thr-539 each contribute to the 3',5'-cyclic GMP site. Positions 538 and 539 each coordinate 3',5'-cyclic AMP. A coiled-coil region spans residues 599–653 (VQEKLEQLETNMDTLYTRFARLLAEYTGAQQKLKQRITVLETKMKQNHEDDYLSD).

The protein belongs to the cyclic nucleotide-gated cation channel (TC 1.A.1.5) family. CNGA2 subfamily. As to quaternary structure, the olfactory cyclic nucleotide-gated channel is an heterotetramer composed of CNGA2, CNGA4 and CNGB1b subunits with 2:1:1 stoichiometry. Olfactory neurons. Widely expressed in brain, enriched in deep cerebellar nuclei, olfactory bulb mitral cells and cerebellar Purkinje neurons. Expressed in olfactory sensory cilia (at protein level).

Its subcellular location is the cell projection. It is found in the cilium membrane. The catalysed reaction is Ca(2+)(in) = Ca(2+)(out). It catalyses the reaction Na(+)(in) = Na(+)(out). The enzyme catalyses K(+)(in) = K(+)(out). It carries out the reaction NH4(+)(in) = NH4(+)(out). The catalysed reaction is Rb(+)(in) = Rb(+)(out). It catalyses the reaction Li(+)(in) = Li(+)(out). The enzyme catalyses Cs(+)(in) = Cs(+)(out). With respect to regulation, the channel activity is inhibited by L-cis diltiazem. Functionally, pore-forming subunit of the olfactory cyclic nucleotide-gated channel. Operates in the cilia of olfactory sensory neurons where chemical stimulation of the odorant is converted to an electrical signal. Mediates odorant-induced cAMP-dependent Ca(2+) influx triggering neuron depolarization. The rise of intracellular Ca(2+) levels potentiates the olfactory response by activating Ca(2+)-dependent Cl(-) channels, but it also serves as a negative feedback signal to desensitize the channel for rapid adaptation to odorants. Conducts cAMP- and cGMP-gated ion currents, with permeability for monovalent and divalent cations. The polypeptide is Cyclic nucleotide-gated channel alpha-2 (Rattus norvegicus (Rat)).